The following is a 374-amino-acid chain: Autophagy-related protein 18e (374 aa).

WD repeat units lie at residues 28 to 66, 72 to 117, 202 to 242, and 247 to 286; these read KSDL…KKSI, ESGF…CLSE, AHDS…LLQE, and VERA…LSFD.

It belongs to the WD repeat PROPPIN family. In terms of assembly, component of the PI(3,5)P2 regulatory complex at least composed of ATG18, SAC/FIG4, FAB1 and VAC14.

It localises to the preautophagosomal structure membrane. It is found in the vacuole membrane. In terms of biological role, the PI(3,5)P2 regulatory complex regulates both the synthesis and turnover of phosphatidylinositol 3,5-bisphosphate (PtdIns(3,5)P2). Required for autophagy. In Arabidopsis thaliana (Mouse-ear cress), this protein is Autophagy-related protein 18e (ATG18E).